We begin with the raw amino-acid sequence, 159 residues long: 3-hydroxyacyl-[acyl-carrier-protein] dehydratase FabZ (159 aa).

The active site involves His58.

Belongs to the thioester dehydratase family. FabZ subfamily.

It localises to the cytoplasm. It catalyses the reaction a (3R)-hydroxyacyl-[ACP] = a (2E)-enoyl-[ACP] + H2O. In terms of biological role, involved in unsaturated fatty acids biosynthesis. Catalyzes the dehydration of short chain beta-hydroxyacyl-ACPs and long chain saturated and unsaturated beta-hydroxyacyl-ACPs. The protein is 3-hydroxyacyl-[acyl-carrier-protein] dehydratase FabZ of Helicobacter pylori (strain J99 / ATCC 700824) (Campylobacter pylori J99).